Here is a 530-residue protein sequence, read N- to C-terminus: Calnexin homolog 1 (530 aa).

Residues 1-20 (MRQRQLFSVFLLLLAFVSFQ) form the signal peptide. Topologically, residues 21 to 466 (KLCYCDDQTV…EKAEQQPNLT (446 aa)) are lumenal. Ser-34 and Asp-65 together coordinate Ca(2+). A disulfide bridge links Cys-108 with Cys-143. The an alpha-D-glucoside site is built by Tyr-112, Lys-114, Tyr-134, and Asp-141. The disordered stretch occupies residues 216–315 (ALIPAKTIPD…KCEAAPGCGE (100 aa)). Residues 223 to 356 (IPDPEDKKPE…RDIPNPDYFE (134 aa)) are p domain (Extended arm). Residues 224–240 (PDPEDKKPEDWDERAKI) are compositionally biased toward basic and acidic residues. A run of 5 repeats spans residues 225-236 (DPEDKKPEDWDE), 242-253 (DPNAVKPEDWDE), 261-272 (DEEAEKPEGWLD), 280-291 (DPEATKPEDWDD), and 295-305 (GMWEAPKIDNP). 4 X approximate repeats stretches follow at residues 225–291 (DPED…DWDD) and 295–352 (GMWE…IPNP). Over residues 250 to 281 (DWDEDAPMEIEDEEAEKPEGWLDDEPEEVDDP) the composition is skewed to acidic residues. An intrachain disulfide couples Cys-307 to Cys-313. Tandem repeats lie at residues 314–324 (GEWKRPMKRNP), 328–338 (GKWSSPLIDNP), and 342–352 (GIWKPRDIPNP). Glu-371 serves as a coordination point for an alpha-D-glucoside. Position 382 (Asp-382) interacts with Ca(2+). Asn-464 carries an N-linked (GlcNAc...) asparagine glycan. Residues 467 to 487 (IGVLVAIVVVFFSLFLKLIFG) form a helical membrane-spanning segment. Topologically, residues 488 to 530 (GKKAAAPVEKKKPEVAESSKSGDEAEKKEETAAPRKRQPRRDN) are cytoplasmic. Positions 490–530 (KAAAPVEKKKPEVAESSKSGDEAEKKEETAAPRKRQPRRDN) are disordered. Positions 495 to 520 (VEKKKPEVAESSKSGDEAEKKEETAA) are enriched in basic and acidic residues. A Phosphoserine modification is found at Ser-508. The span at 521–530 (PRKRQPRRDN) shows a compositional bias: basic residues.

Belongs to the calreticulin family.

The protein resides in the endoplasmic reticulum membrane. Functionally, calcium-binding protein that interacts with newly synthesized monoglucosylated glycoproteins in the endoplasmic reticulum. It may act in assisting protein assembly and/or in the retention within the ER of unassembled protein subunits. It seems to play a major role in the quality control apparatus of the ER by the retention of incorrectly folded proteins. The protein is Calnexin homolog 1 (CNX1) of Arabidopsis thaliana (Mouse-ear cress).